Here is a 233-residue protein sequence, read N- to C-terminus: 2-C-methyl-D-erythritol 4-phosphate cytidylyltransferase (233 aa).

It belongs to the IspD/TarI cytidylyltransferase family. IspD subfamily.

The enzyme catalyses 2-C-methyl-D-erythritol 4-phosphate + CTP + H(+) = 4-CDP-2-C-methyl-D-erythritol + diphosphate. Its pathway is isoprenoid biosynthesis; isopentenyl diphosphate biosynthesis via DXP pathway; isopentenyl diphosphate from 1-deoxy-D-xylulose 5-phosphate: step 2/6. Its function is as follows. Catalyzes the formation of 4-diphosphocytidyl-2-C-methyl-D-erythritol from CTP and 2-C-methyl-D-erythritol 4-phosphate (MEP). The polypeptide is 2-C-methyl-D-erythritol 4-phosphate cytidylyltransferase (Thiobacillus denitrificans (strain ATCC 25259 / T1)).